A 175-amino-acid chain; its full sequence is uncharacterized protein (175 aa).

This is an uncharacterized protein from Acanthamoeba polyphaga (Amoeba).